A 647-amino-acid chain; its full sequence is Leucine-rich repeat and WD repeat-containing protein 1 (647 aa).

4 LRR repeats span residues 22–43 (KIRS…PKLL), 48–69 (QLQE…LGLS), 70–91 (HLRV…CQFP), and 92–113 (KLEE…LKVS). Residues 204-267 (RTQVQKANSP…GSPVAGSDGS (64 aa)) form a disordered region. Residues Ser212, Ser243, Ser251, Ser259, and Ser264 each carry the phosphoserine modification. 7 WD repeats span residues 282-335 (HSKN…LHKY), 341-379 (EFFS…LLHV), 383-422 (FCCG…LWDI), 426-472 (NQDY…CWDV), 484-526 (EVEF…LWSW), 542-582 (VVLA…LYDV), and 598-646 (APTQ…IWGR).

The protein belongs to the LRWD1 family. Integral component of the ORC complex. Directly interacts with CDT1, GMNN and ORC2. Interacts with ORC2 only when non-ubiquitinated; this interaction prevents LRWD1 ubiquitination and degradation. Some of these interactions are regulated in a cell-cycle dependent manner. Interaction with ORC1 occurs predominantly during G1. Association with phosphorylated ORC1 during mitosis is not efficient. Interaction with CDT1 occurs during G1 phase, as well as during mitosis with phosphorylated CDT1. Interaction with GMNN occurs from G1/S to mitosis. Interaction with ORC2 is observed throughout the cell cycle. The stoichiometry of the ORCA/ORC/CDT1/GMNN complex is 1:1:1:2. Interacts with CUL4A and DDB1; this interaction may lead to ubiquitination. In terms of processing, ubiquitinated; undergoes 'Lys-48'-linked polyubiquitination leading to proteasomal degradation. Ubiquitination occurs within the WD repeats at the end of the G1 phase. Ubiquitination may be catalyzed by the CUL4-DDB1 E3 ubiquitin-protein ligase complex and other E3 ligases. In terms of tissue distribution, testis-specific. Drastically down-regulated in testis from patients with Sertoli cell-only syndrome (SCOS).

The protein resides in the nucleus. The protein localises to the chromosome. Its subcellular location is the centromere. It localises to the telomere. It is found in the cytoplasm. The protein resides in the cytoskeleton. The protein localises to the microtubule organizing center. Its subcellular location is the centrosome. It localises to the kinetochore. Its function is as follows. Required for G1/S transition. Recruits and stabilizes the origin recognition complex (ORC) onto chromatin during G1 to establish pre-replication complex (preRC) and to heterochromatic sites in post-replicated cells. Binds a combination of DNA and histone methylation repressive marks on heterochromatin. Binds histone H3 and H4 trimethylation marks H3K9me3, H3K27me3 and H4K20me3 in a cooperative manner with DNA methylation. Required for silencing of major satellite repeats. May be important ORC2, ORC3 and ORC4 stability. The polypeptide is Leucine-rich repeat and WD repeat-containing protein 1 (LRWD1) (Homo sapiens (Human)).